The following is a 208-amino-acid chain: RNA-binding protein KhpB (208 aa).

Residues 5–55 are jag_N domain; it reads TAAGRNVDEAVQSGLQELGLTKDKVEITVIEEGNKGFLGIFGKKPAIVKLV. The region spanning 58 to 135 is the KH domain; the sequence is IDPIQQAKLY…GQYKNVTVDA (78 aa). An R3H domain is found at 140–208; it reads LKRKETLSQL…NRHLVISHKR (69 aa).

This sequence belongs to the KhpB RNA-binding protein family. Forms a complex with KhpA.

The protein resides in the cytoplasm. Its function is as follows. A probable RNA chaperone. Forms a complex with KhpA which binds to cellular RNA and controls its expression. Plays a role in peptidoglycan (PG) homeostasis and cell length regulation. The polypeptide is RNA-binding protein KhpB (Bacillus subtilis (strain 168)).